We begin with the raw amino-acid sequence, 822 residues long: Cadherin-3 (822 aa).

The signal sequence occupies residues 1–25 (MELLSGPHAFLLLLLQVCWLRSVVS). The propeptide occupies 26–99 (EPYRAGFIGE…PTRILRRRKR (74 aa)). 5 Cadherin domains span residues 100–207 (EWVM…KPKF), 208–320 (TQDT…APEF), 321–432 (EPQK…APVF), 433–538 (VPPS…DHGP), and 539–645 (IPEP…RPWK). Residues 100-647 (EWVMPPIFVP…NDCPRPWKGG (548 aa)) are Extracellular-facing. N-linked (GlcNAc...) asparagine glycosylation occurs at Asn192. The N-linked (GlcNAc...) asparagine glycan is linked to Asn558. Residues 648 to 670 (FILPILGAVLALLTLLLALLLLV) traverse the membrane as a helical segment. Topologically, residues 671 to 822 (RKKRKVKEPL…ADMYGGGEDD (152 aa)) are cytoplasmic.

In terms of assembly, interacts with CDCP1 and CTNNB1.

The protein localises to the cell membrane. Its function is as follows. Cadherins are calcium-dependent cell adhesion proteins. They preferentially interact with themselves in a homophilic manner in connecting cells; cadherins may thus contribute to the sorting of heterogeneous cell types. The sequence is that of Cadherin-3 (Cdh3) from Mus musculus (Mouse).